We begin with the raw amino-acid sequence, 334 residues long: Dihydroorotate dehydrogenase (quinone) (334 aa).

FMN contacts are provided by residues Ala59–Lys63 and Thr83. Lys63 contributes to the substrate binding site. Position 108–112 (Asn108–Phe112) interacts with substrate. The FMN site is built by Asn136 and Asn169. Asn169 provides a ligand contact to substrate. Residue Ser172 is the Nucleophile of the active site. Asn174 serves as a coordination point for substrate. Residues Lys214 and Thr242 each contribute to the FMN site. A substrate-binding site is contributed by Asn243–Thr244. FMN is bound by residues Gly265, Gly294, and Tyr315–Ser316.

This sequence belongs to the dihydroorotate dehydrogenase family. Type 2 subfamily. In terms of assembly, monomer. FMN is required as a cofactor.

The protein localises to the cell membrane. The catalysed reaction is (S)-dihydroorotate + a quinone = orotate + a quinol. It functions in the pathway pyrimidine metabolism; UMP biosynthesis via de novo pathway; orotate from (S)-dihydroorotate (quinone route): step 1/1. Its function is as follows. Catalyzes the conversion of dihydroorotate to orotate with quinone as electron acceptor. The chain is Dihydroorotate dehydrogenase (quinone) from Acinetobacter baylyi (strain ATCC 33305 / BD413 / ADP1).